Reading from the N-terminus, the 500-residue chain is L-arabinose isomerase (500 aa).

Mn(2+) contacts are provided by Glu306, Glu333, His349, and His448.

This sequence belongs to the arabinose isomerase family. Mn(2+) is required as a cofactor.

It catalyses the reaction beta-L-arabinopyranose = L-ribulose. It functions in the pathway carbohydrate degradation; L-arabinose degradation via L-ribulose; D-xylulose 5-phosphate from L-arabinose (bacterial route): step 1/3. Functionally, catalyzes the conversion of L-arabinose to L-ribulose. In Cellvibrio japonicus (strain Ueda107) (Pseudomonas fluorescens subsp. cellulosa), this protein is L-arabinose isomerase.